The following is a 443-amino-acid chain: Cysteine proteinase B (443 aa).

Positions 1 to 27 (MATSRAALCAVAVVCVVLAAACAPARA) are cleaved as a signal peptide. A propeptide spans 28 to 125 (IHVGTPAAAL…YRKARADLSA (98 aa)) (activation peptide). 2 disulfide bridges follow: cysteine 147–cysteine 188 and cysteine 181–cysteine 226. The active site involves cysteine 150. Asparagine 228 is a glycosylation site (N-linked (GlcNAc...) asparagine). A disulfide bridge links cysteine 281 with cysteine 329. Catalysis depends on residues histidine 288 and asparagine 308.

The protein belongs to the peptidase C1 family.

The protein is Cysteine proteinase B (LMCPB) of Leishmania mexicana.